The primary structure comprises 445 residues: MKLNKLFDSKTVVFKKSDKYGKSDCCKTKCVEGQIEFGVKIPTDFPAFNRALVTFLKTQKNQLNVDLDSFVELYKAENLCYKTALKVVVASITFCETTPFTMKTEPQKNVEVAVKCDSEHTSLIKEYEVVGNYVNMARQLQDTPSDQLYPEEFVKRFEKAATGLGVKITVLKQADLIKKKMGLLLGVNKGSEREARLLVISYNNNKKSSETLALVGKGITYDSGGMNIKTGDYMRGMKYDMSGAAIVCSTVLALAKNKVKTNVVAVAALTENLPGPHAQRPDDIQTAYNGKTVEIDNTDAEGRLVLADAISYAAKDLKATQIIDVATLTGLMSYILSTTYTGIFSTCDMAWDAFKKAACCAGEPVWRLPMHPDYLKPLESKLADLQNSTSVKGAGSSRAACFLAEFREGVPLIHCDIASTASIQDLGQGVLVRTLYERAAQQAKE.

2 residues coordinate Mn(2+): K217 and D222. K229 is a catalytic residue. Mn(2+) contacts are provided by D240, D299, and E301. The active site involves R303.

It belongs to the peptidase M17 family. Requires Mn(2+) as cofactor.

It localises to the cytoplasm. The enzyme catalyses Release of an N-terminal amino acid, Xaa-|-Yaa-, in which Xaa is preferably Leu, but may be other amino acids including Pro although not Arg or Lys, and Yaa may be Pro. Amino acid amides and methyl esters are also readily hydrolyzed, but rates on arylamides are exceedingly low.. It carries out the reaction Release of an N-terminal amino acid, preferentially leucine, but not glutamic or aspartic acids.. In terms of biological role, presumably involved in the processing and regular turnover of intracellular proteins. Catalyzes the removal of unsubstituted N-terminal amino acids from various peptides. This Mycoplasma pneumoniae (strain ATCC 29342 / M129 / Subtype 1) (Mycoplasmoides pneumoniae) protein is Probable cytosol aminopeptidase (pepA).